The primary structure comprises 177 residues: 3-hydroxydecanoyl-[acyl-carrier-protein] dehydratase (177 aa).

Residue H71 is part of the active site.

The protein belongs to the thioester dehydratase family. FabA subfamily. As to quaternary structure, homodimer.

It localises to the cytoplasm. It carries out the reaction a (3R)-hydroxyacyl-[ACP] = a (2E)-enoyl-[ACP] + H2O. The enzyme catalyses (3R)-hydroxydecanoyl-[ACP] = (2E)-decenoyl-[ACP] + H2O. The catalysed reaction is (2E)-decenoyl-[ACP] = (3Z)-decenoyl-[ACP]. Its pathway is lipid metabolism; fatty acid biosynthesis. Necessary for the introduction of cis unsaturation into fatty acids. Catalyzes the dehydration of (3R)-3-hydroxydecanoyl-ACP to E-(2)-decenoyl-ACP and then its isomerization to Z-(3)-decenoyl-ACP. Can catalyze the dehydratase reaction for beta-hydroxyacyl-ACPs with saturated chain lengths up to 16:0, being most active on intermediate chain length. The polypeptide is 3-hydroxydecanoyl-[acyl-carrier-protein] dehydratase (Wigglesworthia glossinidia brevipalpis).